The sequence spans 150 residues: Soluble pyridine nucleotide transhydrogenase (150 aa).

It belongs to the class-I pyridine nucleotide-disulfide oxidoreductase family. Requires FAD as cofactor.

The protein localises to the cytoplasm. The catalysed reaction is NAD(+) + NADPH = NADH + NADP(+). Functionally, conversion of NADPH, generated by peripheral catabolic pathways, to NADH, which can enter the respiratory chain for energy generation. The protein is Soluble pyridine nucleotide transhydrogenase (sthA) of Pectobacterium carotovorum subsp. carotovorum (Erwinia carotovora subsp. carotovora).